The chain runs to 306 residues: Voltage-dependent anion channel-forming protein RSc3414 (306 aa).

Helical transmembrane passes span 28–48 (LFLI…WLPI), 50–70 (VNLS…FLGF), 213–233 (YSVM…FGLV), and 239–259 (FTPV…AIAA).

Belongs to the anion channel-forming bestrophin (TC 1.A.46) family.

The protein resides in the cell membrane. This Ralstonia nicotianae (strain ATCC BAA-1114 / GMI1000) (Ralstonia solanacearum) protein is Voltage-dependent anion channel-forming protein RSc3414.